The sequence spans 258 residues: Adenylate kinase (258 aa).

Residue 52 to 57 (GAGKGT) participates in ATP binding. An NMP region spans residues 72 to 101 (ATGDMLRSQVAKKTALGKEAKKIMDQGGLV). AMP contacts are provided by residues threonine 73, arginine 78, 99 to 101 (GLV), 128 to 131 (GFPR), and glutamine 135. Positions 169–206 (GRLVHPASGRSYHKIFNPPKEEMKDDVTGEPLIQRSDD) are LID. Residues arginine 170 and 179–180 (SY) contribute to the ATP site. AMP contacts are provided by arginine 203 and arginine 214. Glutamine 242 is a binding site for ATP.

This sequence belongs to the adenylate kinase family. AK2 subfamily. In terms of assembly, monomer.

The protein localises to the cytoplasm. It localises to the cytosol. Its subcellular location is the mitochondrion intermembrane space. The enzyme catalyses AMP + ATP = 2 ADP. In terms of biological role, catalyzes the reversible transfer of the terminal phosphate group between ATP and AMP. Plays an important role in cellular energy homeostasis and in adenine nucleotide metabolism. Adenylate kinase activity is critical for regulation of the phosphate utilization and the AMP de novo biosynthesis pathways. The polypeptide is Adenylate kinase (adk1) (Aspergillus niger (strain ATCC MYA-4892 / CBS 513.88 / FGSC A1513)).